Reading from the N-terminus, the 132-residue chain is MAFQFPDHFRFADTHEYASLDGELVRIGISAFAVDQLGDIVFVDLPEVGDRLNRGTTFGSVESVKAVEDLHAPISGELVRINESVLSSPDELQNDPHGEGWLLVVRPADPAQLQDLMDAATYANKVAIESSN.

The 83-residue stretch at 24–106 (LVRIGISAFA…HGEGWLLVVR (83 aa)) folds into the Lipoyl-binding domain. Lys65 is modified (N6-lipoyllysine).

It belongs to the GcvH family. The glycine cleavage system is composed of four proteins: P, T, L and H. (R)-lipoate serves as cofactor.

Functionally, the glycine cleavage system catalyzes the degradation of glycine. The H protein shuttles the methylamine group of glycine from the P protein to the T protein. In Prochlorococcus marinus (strain MIT 9313), this protein is Glycine cleavage system H protein.